A 174-amino-acid polypeptide reads, in one-letter code: Crossover junction endodeoxyribonuclease RuvC (174 aa).

Active-site residues include aspartate 8, glutamate 69, and aspartate 141. Positions 8, 69, and 141 each coordinate Mg(2+).

It belongs to the RuvC family. Homodimer which binds Holliday junction (HJ) DNA. The HJ becomes 2-fold symmetrical on binding to RuvC with unstacked arms; it has a different conformation from HJ DNA in complex with RuvA. In the full resolvosome a probable DNA-RuvA(4)-RuvB(12)-RuvC(2) complex forms which resolves the HJ. The cofactor is Mg(2+).

The protein localises to the cytoplasm. The enzyme catalyses Endonucleolytic cleavage at a junction such as a reciprocal single-stranded crossover between two homologous DNA duplexes (Holliday junction).. Functionally, the RuvA-RuvB-RuvC complex processes Holliday junction (HJ) DNA during genetic recombination and DNA repair. Endonuclease that resolves HJ intermediates. Cleaves cruciform DNA by making single-stranded nicks across the HJ at symmetrical positions within the homologous arms, yielding a 5'-phosphate and a 3'-hydroxyl group; requires a central core of homology in the junction. The consensus cleavage sequence is 5'-(A/T)TT(C/G)-3'. Cleavage occurs on the 3'-side of the TT dinucleotide at the point of strand exchange. HJ branch migration catalyzed by RuvA-RuvB allows RuvC to scan DNA until it finds its consensus sequence, where it cleaves and resolves the cruciform DNA. The polypeptide is Crossover junction endodeoxyribonuclease RuvC (Xanthomonas oryzae pv. oryzae (strain MAFF 311018)).